An 81-amino-acid polypeptide reads, in one-letter code: Photosystem I iron-sulfur center (81 aa).

4Fe-4S ferredoxin-type domains follow at residues Ala-2–Trp-31 and Ile-39–Tyr-68. Residues Cys-11, Cys-14, Cys-17, Cys-21, Cys-48, Cys-51, Cys-54, and Cys-58 each contribute to the [4Fe-4S] cluster site.

As to quaternary structure, the eukaryotic PSI reaction center is composed of at least 11 subunits. [4Fe-4S] cluster is required as a cofactor.

Its subcellular location is the plastid. It localises to the chloroplast thylakoid membrane. The catalysed reaction is reduced [plastocyanin] + hnu + oxidized [2Fe-2S]-[ferredoxin] = oxidized [plastocyanin] + reduced [2Fe-2S]-[ferredoxin]. Functionally, apoprotein for the two 4Fe-4S centers FA and FB of photosystem I (PSI); essential for photochemical activity. FB is the terminal electron acceptor of PSI, donating electrons to ferredoxin. The C-terminus interacts with PsaA/B/D and helps assemble the protein into the PSI complex. Required for binding of PsaD and PsaE to PSI. PSI is a plastocyanin-ferredoxin oxidoreductase, converting photonic excitation into a charge separation, which transfers an electron from the donor P700 chlorophyll pair to the spectroscopically characterized acceptors A0, A1, FX, FA and FB in turn. The protein is Photosystem I iron-sulfur center of Gnetum parvifolium (Small-leaved jointfir).